We begin with the raw amino-acid sequence, 436 residues long: Divalent metal cation transporter MntH (436 aa).

A compositionally biased stretch (basic and acidic residues) spans 1-22 (MDSRSPSLPDDRPDPPEQHLDA). The tract at residues 1 to 31 (MDSRSPSLPDDRPDPPEQHLDARAGATLRGT) is disordered. 11 consecutive transmembrane segments (helical) span residues 40-60 (ILPFLGPAVIASIAYMDPGNF), 71-91 (GYSLLWVILAANLMAMVIQNL), 115-135 (LVWFYWIQAELVAMATDLAEF), 144-164 (LLTGLPMFWGAVVTGVVTFWL), 177-197 (LAVGAFVLMIGVAYLVQVVLA), 216-236 (GSAYLAVGIIGATVMPHVIYL), 264-284 (VIAAMGLAGLINMSMLAVAAA), 304-324 (LTPLLGPAASVLFAVALLASG), 354-374 (LITMLPAFIVILLGMDPSSVL), 375-395 (ILSQVILCFGVPFALVPLLLF), and 411-431 (FTVIGWVIAVIIIALNGYLLW).

Belongs to the NRAMP family.

The protein localises to the cell membrane. Its function is as follows. H(+)-stimulated, divalent metal cation uptake system. The sequence is that of Divalent metal cation transporter MntH from Deinococcus radiodurans (strain ATCC 13939 / DSM 20539 / JCM 16871 / CCUG 27074 / LMG 4051 / NBRC 15346 / NCIMB 9279 / VKM B-1422 / R1).